The following is a 118-amino-acid chain: MATATSKPKAVERIKMRIRKGDTVQVIAGKDKGKTGAVLRTLPNENRVIVEGVNMRTRHEKPSQEGESGRIVTEEASLHASNVMLYSTDKKVASRVEIVVEKDGTKKRKLKKTGEVLD.

The protein belongs to the universal ribosomal protein uL24 family. Part of the 50S ribosomal subunit.

One of two assembly initiator proteins, it binds directly to the 5'-end of the 23S rRNA, where it nucleates assembly of the 50S subunit. Its function is as follows. One of the proteins that surrounds the polypeptide exit tunnel on the outside of the subunit. The sequence is that of Large ribosomal subunit protein uL24 from Synechococcus sp. (strain CC9902).